We begin with the raw amino-acid sequence, 1270 residues long: Microtubule-associated tumor suppressor 1 (1270 aa).

Residues 1 to 14 (MTDDNSDDKIEDEL) show a composition bias toward acidic residues. Disordered stretches follow at residues 1–50 (MTDD…NSAN) and 184–236 (FHTA…VTPS). Residues 38-50 (NSSASSVNWNSAN) are compositionally biased toward low complexity. A Phosphothreonine modification is found at T186. The span at 197 to 211 (SGSTSSLSYSTWTSS) shows a compositional bias: low complexity. Residues 212 to 228 (HSDKTHARETTYDRESF) show a composition bias toward basic and acidic residues. S381, S399, and S443 each carry phosphoserine. 2 disordered regions span residues 524-560 (DAAL…PRSD) and 592-622 (THSK…SSSN). A compositionally biased stretch (polar residues) spans 533–556 (RPQQTSASSPSSVNSRQQTVLSRT). S629 is subject to Phosphoserine. 3 stretches are compositionally biased toward polar residues: residues 701-710 (SKTTTTSGRN), 759-776 (VSSS…SSWV), and 797-815 (TGST…TYSN). Positions 701–815 (SKTTTTSGRN…THSELSTYSN (115 aa)) are disordered. The stretch at 940–1231 (IQHLLSEREE…RLSMENEELL (292 aa)) forms a coiled coil. Residues S1203, S1224, S1245, S1255, S1259, S1261, S1264, and S1268 each carry the phosphoserine modification. Positions 1237 to 1270 (GDLCSPKRSPTSSAIPLQSPRNSGSFPSPSISPR) are disordered. Positions 1244 to 1270 (RSPTSSAIPLQSPRNSGSFPSPSISPR) are enriched in polar residues.

Belongs to the MTUS1 family. As to quaternary structure, homodimer. Interacts with AGTR2. Interacts with PTPN6. Isoform 1 associates with microtubules. As to expression, ubiquitously expressed (at protein level). Highly expressed in brain. Down-regulated in ovarian carcinoma, pancreas carcinoma, colon carcinoma and head and neck squamous cell carcinoma (HNSCC). Isoform 1 is the major isoform in most peripheral tissues. Isoform 2 is abundant in most peripheral tissues. Isoform 3 is the major isoform in brain, female reproductive tissues, thyroid and heart. Within brain it is highly expressed in corpus callosum and pons. Isoform 6 is brain-specific, it is the major isoform in cerebellum and fetal brain.

The protein localises to the mitochondrion. The protein resides in the golgi apparatus. Its subcellular location is the cell membrane. It localises to the nucleus. It is found in the cytoplasm. The protein localises to the cytoskeleton. The protein resides in the microtubule organizing center. Its subcellular location is the centrosome. It localises to the spindle. Its function is as follows. Cooperates with AGTR2 to inhibit ERK2 activation and cell proliferation. May be required for AGTR2 cell surface expression. Together with PTPN6, induces UBE2V2 expression upon angiotensin-II stimulation. Isoform 1 inhibits breast cancer cell proliferation, delays the progression of mitosis by prolonging metaphase and reduces tumor growth. The polypeptide is Microtubule-associated tumor suppressor 1 (MTUS1) (Homo sapiens (Human)).